Here is a 111-residue protein sequence, read N- to C-terminus: Small ribosomal subunit protein uS10 (111 aa).

This sequence belongs to the universal ribosomal protein uS10 family. Part of the 30S ribosomal subunit.

Its function is as follows. Involved in the binding of tRNA to the ribosomes. In Protochlamydia amoebophila (strain UWE25), this protein is Small ribosomal subunit protein uS10.